Consider the following 463-residue polypeptide: Asparagine--tRNA ligase (463 aa).

It belongs to the class-II aminoacyl-tRNA synthetase family. In terms of assembly, homodimer.

The protein localises to the cytoplasm. It carries out the reaction tRNA(Asn) + L-asparagine + ATP = L-asparaginyl-tRNA(Asn) + AMP + diphosphate + H(+). The chain is Asparagine--tRNA ligase from Bacillus cereus (strain ATCC 10987 / NRS 248).